A 326-amino-acid polypeptide reads, in one-letter code: Vitamin B12 import system permease protein BtuC (326 aa).

9 helical membrane-spanning segments follow: residues 15 to 35 (WLLS…CAGE), 61 to 81 (LAVL…QALF), 88 to 108 (PGLL…VLLG), 112 to 132 (LPGW…TLIL), 146 to 166 (LLAG…AIYF), 184 to 204 (GGVD…LIWI), 240 to 260 (GWMV…GLVI), 274 to 294 (VLLP…DVVA), and 302 to 322 (ELPI…WLLL).

It belongs to the binding-protein-dependent transport system permease family. FecCD subfamily. In terms of assembly, the complex is composed of two ATP-binding proteins (BtuD), two transmembrane proteins (BtuC) and a solute-binding protein (BtuF).

It localises to the cell inner membrane. Functionally, part of the ABC transporter complex BtuCDF involved in vitamin B12 import. Involved in the translocation of the substrate across the membrane. This Salmonella agona (strain SL483) protein is Vitamin B12 import system permease protein BtuC.